A 429-amino-acid polypeptide reads, in one-letter code: Ribosomal RNA small subunit methyltransferase B (429 aa).

Residues 254-260 (CAAPGGK), D277, D303, and D322 contribute to the S-adenosyl-L-methionine site. C375 serves as the catalytic Nucleophile.

This sequence belongs to the class I-like SAM-binding methyltransferase superfamily. RsmB/NOP family.

Its subcellular location is the cytoplasm. The catalysed reaction is cytidine(967) in 16S rRNA + S-adenosyl-L-methionine = 5-methylcytidine(967) in 16S rRNA + S-adenosyl-L-homocysteine + H(+). Functionally, specifically methylates the cytosine at position 967 (m5C967) of 16S rRNA. The chain is Ribosomal RNA small subunit methyltransferase B from Pectobacterium atrosepticum (strain SCRI 1043 / ATCC BAA-672) (Erwinia carotovora subsp. atroseptica).